Consider the following 272-residue polypeptide: NAD kinase (272 aa).

D50 serves as the catalytic Proton acceptor. NAD(+) is bound by residues 50 to 51 (DG), 126 to 127 (NE), R152, D154, 165 to 170 (TAYNKS), and A189.

The protein belongs to the NAD kinase family. It depends on a divalent metal cation as a cofactor.

The protein resides in the cytoplasm. It catalyses the reaction NAD(+) + ATP = ADP + NADP(+) + H(+). Functionally, involved in the regulation of the intracellular balance of NAD and NADP, and is a key enzyme in the biosynthesis of NADP. Catalyzes specifically the phosphorylation on 2'-hydroxyl of the adenosine moiety of NAD to yield NADP. This chain is NAD kinase, found in Streptococcus pneumoniae (strain Hungary19A-6).